A 347-amino-acid chain; its full sequence is NADH-ubiquinone oxidoreductase chain 2 (347 aa).

The next 11 helical transmembrane spans lie at 3–23, 25–45, 67–87, 96–116, 122–142, 145–165, 178–198, 200–220, 239–259, 274–294, and 325–345; these read PIIF…VMIS, HWLL…PIMM, SMLL…WTVM, MLMT…FWVP, IPLS…MSVL, IFPS…ILIG, IMAY…PYNP, MTLL…TMFM, IMTV…PLSG, NSII…YFYM, and FLPT…MLSV.

This sequence belongs to the complex I subunit 2 family. In terms of assembly, core subunit of respiratory chain NADH dehydrogenase (Complex I) which is composed of 45 different subunits. Interacts with TMEM242.

The protein resides in the mitochondrion inner membrane. It carries out the reaction a ubiquinone + NADH + 5 H(+)(in) = a ubiquinol + NAD(+) + 4 H(+)(out). In terms of biological role, core subunit of the mitochondrial membrane respiratory chain NADH dehydrogenase (Complex I) which catalyzes electron transfer from NADH through the respiratory chain, using ubiquinone as an electron acceptor. Essential for the catalytic activity and assembly of complex I. This is NADH-ubiquinone oxidoreductase chain 2 from Bos indicus (Zebu).